A 60-amino-acid chain; its full sequence is Large ribosomal subunit protein bL32 (60 aa).

Over residues 1 to 16 (MAVPKRKTTPSKRGMR) the composition is skewed to basic residues. Residues 1 to 60 (MAVPKRKTTPSKRGMRRSADALKQPAYVENPDSGELHRPHHVDLKSGMYRGKQILKPKGE) are disordered. Residues 34 to 44 (GELHRPHHVDL) show a composition bias toward basic and acidic residues.

This sequence belongs to the bacterial ribosomal protein bL32 family.

The sequence is that of Large ribosomal subunit protein bL32 from Parvibaculum lavamentivorans (strain DS-1 / DSM 13023 / NCIMB 13966).